Here is a 310-residue protein sequence, read N- to C-terminus: Collagen-like protein V6 (310 aa).

Residues 1–41 (MSLSTLFSPNTYNINSKSQTLNNLPSNPTSQTNTLWSNNAY) are compositionally biased toward polar residues. Positions 1–183 (MSLSTLFSPN…GDPGAKGDPG (183 aa)) are disordered. Collagen-like domains lie at 61–119 (GQKG…KGQA) and 123–182 (GLKG…KGDP). Basic and acidic residues predominate over residues 92–101 (SGDKGDKGDS). N-linked (GlcNAc...) asparagine; by host glycosylation is found at asparagine 227 and asparagine 264.

This sequence belongs to the sputnik virus V6 family.

In Sputnik virophage, this protein is Collagen-like protein V6.